Here is a 213-residue protein sequence, read N- to C-terminus: LexA repressor (213 aa).

Residues 27 to 47 (QTEIARAFGFKGVRAAQYHLE) constitute a DNA-binding region (H-T-H motif). Residues serine 133 and lysine 170 each act as for autocatalytic cleavage activity in the active site.

This sequence belongs to the peptidase S24 family. As to quaternary structure, homodimer.

It catalyses the reaction Hydrolysis of Ala-|-Gly bond in repressor LexA.. In terms of biological role, represses a number of genes involved in the response to DNA damage (SOS response), including recA and lexA. In the presence of single-stranded DNA, RecA interacts with LexA causing an autocatalytic cleavage which disrupts the DNA-binding part of LexA, leading to derepression of the SOS regulon and eventually DNA repair. The polypeptide is LexA repressor (Xanthomonas campestris).